We begin with the raw amino-acid sequence, 150 residues long: Cytochrome c oxidase subunit 5A, mitochondrial (150 aa).

The N-terminal 41 residues, 1-41 (MLGAALRRCAVAATAWAGPRGLLHSAPTPGPAAAIHSVRCY), are a transit peptide targeting the mitochondrion. The SIFI-degron signature appears at 2 to 17 (LGAALRRCAVAATAWA). N6-acetyllysine occurs at positions 87 and 113. Thr141 carries the post-translational modification Phosphothreonine.

Belongs to the cytochrome c oxidase subunit 5A family. Component of the cytochrome c oxidase (complex IV, CIV), a multisubunit enzyme composed of 14 subunits. The complex is composed of a catalytic core of 3 subunits MT-CO1, MT-CO2 and MT-CO3, encoded in the mitochondrial DNA, and 11 supernumerary subunits COX4I, COX5A, COX5B, COX6A, COX6B, COX6C, COX7A, COX7B, COX7C, COX8 and NDUFA4, which are encoded in the nuclear genome. The complex exists as a monomer or a dimer and forms supercomplexes (SCs) in the inner mitochondrial membrane with NADH-ubiquinone oxidoreductase (complex I, CI) and ubiquinol-cytochrome c oxidoreductase (cytochrome b-c1 complex, complex III, CIII), resulting in different assemblies (supercomplex SCI(1)III(2)IV(1) and megacomplex MCI(2)III(2)IV(2)). Interacts with AFG1L. Interacts with RAB5IF. Post-translationally, in response to mitochondrial stress, the precursor protein is ubiquitinated by the SIFI complex in the cytoplasm before mitochondrial import, leading to its degradation. Within the SIFI complex, UBR4 initiates ubiquitin chain that are further elongated or branched by KCMF1.

It is found in the mitochondrion inner membrane. It participates in energy metabolism; oxidative phosphorylation. Its function is as follows. Component of the cytochrome c oxidase, the last enzyme in the mitochondrial electron transport chain which drives oxidative phosphorylation. The respiratory chain contains 3 multisubunit complexes succinate dehydrogenase (complex II, CII), ubiquinol-cytochrome c oxidoreductase (cytochrome b-c1 complex, complex III, CIII) and cytochrome c oxidase (complex IV, CIV), that cooperate to transfer electrons derived from NADH and succinate to molecular oxygen, creating an electrochemical gradient over the inner membrane that drives transmembrane transport and the ATP synthase. Cytochrome c oxidase is the component of the respiratory chain that catalyzes the reduction of oxygen to water. Electrons originating from reduced cytochrome c in the intermembrane space (IMS) are transferred via the dinuclear copper A center (CU(A)) of subunit 2 and heme A of subunit 1 to the active site in subunit 1, a binuclear center (BNC) formed by heme A3 and copper B (CU(B)). The BNC reduces molecular oxygen to 2 water molecules using 4 electrons from cytochrome c in the IMS and 4 protons from the mitochondrial matrix. The sequence is that of Cytochrome c oxidase subunit 5A, mitochondrial (COX5A) from Saimiri sciureus (Common squirrel monkey).